Reading from the N-terminus, the 151-residue chain is UPF0178 protein PFLU_5917 (151 aa).

This sequence belongs to the UPF0178 family.

This chain is UPF0178 protein PFLU_5917, found in Pseudomonas fluorescens (strain SBW25).